Consider the following 61-residue polypeptide: [Thr6]-bradykinyl-Val,Asp (61 aa).

A signal peptide spans 1–22; sequence MSFLKKSLFLVLFLGFVSFSIC. Residues 23-50 constitute a propeptide that is removed on maturation; the sequence is EEEKREDEEEENEREENKESEEKRNQEE. Residues 24–61 form a disordered region; sequence EEKREDEEEENEREENKESEEKRNQEERPPGFTPFRVD. Acidic residues predominate over residues 26–36; the sequence is KREDEEEENER. The segment covering 37–52 has biased composition (basic and acidic residues); the sequence is EENKESEEKRNQEERP. Pro53 bears the 4-hydroxyproline; in form [Hyp3,Thr6]-bradykinyl-Val,Asp and [Hyp3,Thr6]-bradykinin mark.

This sequence belongs to the frog skin active peptide (FSAP) family. Bradykinin-related peptide subfamily. As to expression, expressed by the skin glands.

The protein resides in the secreted. In terms of biological role, induces relaxation of rat smooth muscle from tail artery (EC(50)=16.8 nM) and contraction of that from ileum (EC(50)=205 nM), urinary bladder (EC(50)=895 nM) and uterus (EC(50)=60.3 nM). Binds to both bradykinin receptor B1 (BDKRB1) and B2 (BDKRB2). Its function is as follows. [Hyp3,Thr6]-bradykinin: Induces relaxation of rat smooth muscle from tail artery (EC(50)=56.7 nM) and contraction of that from ileum (EC(50)=588 nM), urinary bladder (EC(50)=4.6 uM) and uterus (EC(50)=3.9 nM). Binds to both bradykinin receptor B1 (BDKRB1) and B2 (BDKRB2). In arterial smooth muscle, the effect via BDKRB1 is stronger, in uterus, ileum and urinary bladder the effect via BDKRB2. Functionally, induces relaxation of rat smooth muscle from tail artery (EC(50)=10.8 nM) and contraction of that from ileum (EC(50)=645 nM), urinary bladder (EC(50)=1.1 uM) and uterus (EC(50)=1.2 uM). Binds to both bradykinin receptor B1 (BDKRB1) and B2 (BDKRB2). Apart from uterus smooth muscle, the effect via BDKRB2 is stronger. [Hyp3,Thr6]-bradykinyl-Val,Asp: Induces relaxation of rat smooth muscle from tail artery (EC(50)=3.5 nM) and contraction of that from ileum (EC(50)=223 nM), urinary bladder (EC(50)=1.5 uM) and uterus (EC(50)=356 nM). Binds to both bradykinin receptor B1 (BDKRB1) and B2 (BDKRB2); the effects via BDKRB2 are stronger. This Agalychnis dacnicolor (Giant Mexican leaf frog) protein is [Thr6]-bradykinyl-Val,Asp.